The following is a 148-amino-acid chain: Protoporphyrinogen IX oxidase (148 aa).

Helical transmembrane passes span 7–27 (YFLWVKAFHVIAVISWMAALF), 59–79 (FIASPAMGFTLITGILMLLIA), 86–106 (GGWLHAKLALVVLLLIYHFYC), and 128–148 (FNEIPTILMILIVILVVVKPF). A heme-binding site is contributed by His-15. Lys-92 provides a ligand contact to heme.

This sequence belongs to the HemJ family. In terms of assembly, homodimer. The cofactor is heme b.

Its subcellular location is the cell membrane. The enzyme catalyses protoporphyrinogen IX + 3 A = protoporphyrin IX + 3 AH2. The protein operates within porphyrin-containing compound metabolism; protoporphyrin-IX biosynthesis; protoporphyrin-IX from protoporphyrinogen-IX: step 1/1. Functionally, catalyzes the oxidation of protoporphyrinogen IX to protoporphyrin IX. Is involved in the biosynthesis of tetrapyrrole molecules like heme. Does not use oxygen or artificial electron acceptors such as menadione or benzoquinone. The polypeptide is Protoporphyrinogen IX oxidase (Helicobacter pylori (strain J99 / ATCC 700824) (Campylobacter pylori J99)).